Consider the following 103-residue polypeptide: Carboxysome shell protein CcmK2 (103 aa).

One can recognise a BMC domain in the interval 4-90 (AVGMIETRGF…PHENLEYVLP (87 aa)).

This sequence belongs to the bacterial microcompartments protein family. CcmK subfamily. Homohexamer, might also make dodecamers. Interacts with full-length CcmM. Forms mixed heterohexamers of all possible stoichiometries with CcmK1, which might form dodecamers. Only very weak interactions with CcmK3 and CcmK4 were seen.

It localises to the carboxysome. Its function is as follows. One of the shell proteins of the carboxysome, a polyhedral inclusion where RuBisCO (ribulose bisphosphate carboxylase, rbcL-rbcS) is sequestered. The central pore probably regulates metabolite flux. Hexamers make sheets that form the facets of the polyhedral carboxysome. In Synechocystis sp. (strain ATCC 27184 / PCC 6803 / Kazusa), this protein is Carboxysome shell protein CcmK2.